Here is a 274-residue protein sequence, read N- to C-terminus: Formamidopyrimidine-DNA glycosylase (274 aa).

P2 functions as the Schiff-base intermediate with DNA in the catalytic mechanism. The Proton donor role is filled by E3. Residue K60 is the Proton donor; for beta-elimination activity of the active site. Residues H93 and R112 each contribute to the DNA site. The FPG-type zinc finger occupies F240–R274. The Proton donor; for delta-elimination activity role is filled by R264.

This sequence belongs to the FPG family. As to quaternary structure, monomer. Zn(2+) serves as cofactor.

It carries out the reaction Hydrolysis of DNA containing ring-opened 7-methylguanine residues, releasing 2,6-diamino-4-hydroxy-5-(N-methyl)formamidopyrimidine.. The catalysed reaction is 2'-deoxyribonucleotide-(2'-deoxyribose 5'-phosphate)-2'-deoxyribonucleotide-DNA = a 3'-end 2'-deoxyribonucleotide-(2,3-dehydro-2,3-deoxyribose 5'-phosphate)-DNA + a 5'-end 5'-phospho-2'-deoxyribonucleoside-DNA + H(+). Involved in base excision repair of DNA damaged by oxidation or by mutagenic agents. Acts as a DNA glycosylase that recognizes and removes damaged bases. Has a preference for oxidized purines, such as 7,8-dihydro-8-oxoguanine (8-oxoG). Has AP (apurinic/apyrimidinic) lyase activity and introduces nicks in the DNA strand. Cleaves the DNA backbone by beta-delta elimination to generate a single-strand break at the site of the removed base with both 3'- and 5'-phosphates. The sequence is that of Formamidopyrimidine-DNA glycosylase from Geobacillus kaustophilus (strain HTA426).